The following is a 122-amino-acid chain: uncharacterized protein (122 aa).

Positions 1 to 28 (MVPGPPESVVRFFLWFCFLLPPTRKASC) are cleaved as a signal peptide. An N-linked (GlcNAc...) asparagine glycan is attached at Asn49.

It localises to the secreted. This is an uncharacterized protein from Homo sapiens (Human).